The chain runs to 463 residues: ATP-dependent protease ATPase subunit HslU (463 aa).

Residues isoleucine 19, 61 to 66, aspartate 277, glutamate 341, and arginine 413 contribute to the ATP site; that span reads GVGKTE.

Belongs to the ClpX chaperone family. HslU subfamily. In terms of assembly, a double ring-shaped homohexamer of HslV is capped on each side by a ring-shaped HslU homohexamer. The assembly of the HslU/HslV complex is dependent on binding of ATP.

The protein resides in the cytoplasm. ATPase subunit of a proteasome-like degradation complex; this subunit has chaperone activity. The binding of ATP and its subsequent hydrolysis by HslU are essential for unfolding of protein substrates subsequently hydrolyzed by HslV. HslU recognizes the N-terminal part of its protein substrates and unfolds these before they are guided to HslV for hydrolysis. This is ATP-dependent protease ATPase subunit HslU from Bacillus cereus (strain 03BB102).